Here is a 404-residue protein sequence, read N- to C-terminus: Serpin-Z2B (404 aa).

The segment at 349–373 is RCL; that stretch reads GTEAAAATACTMKFLCLTLTSPVDF.

The protein belongs to the serpin family.

In terms of biological role, probable serine protease inhibitor. The chain is Serpin-Z2B from Oryza sativa subsp. japonica (Rice).